A 364-amino-acid chain; its full sequence is Caffeic acid 3-O-methyltransferase 2 (364 aa).

Residue 129-135 (MNQDKVL) coordinates substrate. The segment at 161 to 179 (AFEYHGTDPRFNKVFNKGM) is substrate binding. S-adenosyl-L-methionine is bound by residues Gly207, Asp230, Asp250, Met251, and Lys264. The active-site Proton acceptor is the His268.

This sequence belongs to the class I-like SAM-binding methyltransferase superfamily. Cation-independent O-methyltransferase family. COMT subfamily. As to quaternary structure, homodimer.

It carries out the reaction (E)-caffeate + S-adenosyl-L-methionine = (E)-ferulate + S-adenosyl-L-homocysteine + H(+). The protein operates within aromatic compound metabolism; phenylpropanoid biosynthesis. Its function is as follows. Catalyzes the conversion of caffeic acid to ferulic acid and of 5-hydroxyferulic acid to sinapic acid. The resulting products may subsequently be converted to the corresponding alcohols that are incorporated into lignins. The chain is Caffeic acid 3-O-methyltransferase 2 (OMT2) from Populus tremuloides (Quaking aspen).